The sequence spans 628 residues: Biosynthetic arginine decarboxylase (628 aa).

The residue at position 99 (K99) is an N6-(pyridoxal phosphate)lysine. Position 279 to 289 (279 to 289 (VDVGGGLGIDY)) interacts with substrate.

It belongs to the Orn/Lys/Arg decarboxylase class-II family. SpeA subfamily. The cofactor is Mg(2+). Pyridoxal 5'-phosphate serves as cofactor.

The enzyme catalyses L-arginine + H(+) = agmatine + CO2. It participates in amine and polyamine biosynthesis; agmatine biosynthesis; agmatine from L-arginine: step 1/1. In terms of biological role, catalyzes the biosynthesis of agmatine from arginine. This is Biosynthetic arginine decarboxylase from Xylella fastidiosa (strain M12).